A 282-amino-acid chain; its full sequence is Formamidopyrimidine-DNA glycosylase (282 aa).

P2 functions as the Schiff-base intermediate with DNA in the catalytic mechanism. E3 serves as the catalytic Proton donor. The active-site Proton donor; for beta-elimination activity is the K58. Residues H96, R115, and K152 each coordinate DNA. Residues 238-272 form an FPG-type zinc finger; it reads HVYGRGGQPCERCGEEILKTVLGGRGTHYCPSCQN. Catalysis depends on R262, which acts as the Proton donor; for delta-elimination activity.

Belongs to the FPG family. As to quaternary structure, monomer. Requires Zn(2+) as cofactor.

The enzyme catalyses Hydrolysis of DNA containing ring-opened 7-methylguanine residues, releasing 2,6-diamino-4-hydroxy-5-(N-methyl)formamidopyrimidine.. The catalysed reaction is 2'-deoxyribonucleotide-(2'-deoxyribose 5'-phosphate)-2'-deoxyribonucleotide-DNA = a 3'-end 2'-deoxyribonucleotide-(2,3-dehydro-2,3-deoxyribose 5'-phosphate)-DNA + a 5'-end 5'-phospho-2'-deoxyribonucleoside-DNA + H(+). Its function is as follows. Involved in base excision repair of DNA damaged by oxidation or by mutagenic agents. Acts as a DNA glycosylase that recognizes and removes damaged bases. Has a preference for oxidized purines, such as 7,8-dihydro-8-oxoguanine (8-oxoG). Has AP (apurinic/apyrimidinic) lyase activity and introduces nicks in the DNA strand. Cleaves the DNA backbone by beta-delta elimination to generate a single-strand break at the site of the removed base with both 3'- and 5'-phosphates. The protein is Formamidopyrimidine-DNA glycosylase of Corynebacterium aurimucosum (strain ATCC 700975 / DSM 44827 / CIP 107346 / CN-1) (Corynebacterium nigricans).